The primary structure comprises 119 residues: Large ribosomal subunit protein bL20 (119 aa).

Belongs to the bacterial ribosomal protein bL20 family.

Functionally, binds directly to 23S ribosomal RNA and is necessary for the in vitro assembly process of the 50S ribosomal subunit. It is not involved in the protein synthesizing functions of that subunit. In Deinococcus geothermalis (strain DSM 11300 / CIP 105573 / AG-3a), this protein is Large ribosomal subunit protein bL20.